We begin with the raw amino-acid sequence, 1578 residues long: FH1/FH2 domain-containing protein 3 (1578 aa).

A GBD/FH3 domain is found at 18 to 405; it reads NSTNFPEPSR…DLCEKDEEEE (388 aa). 7 disordered regions span residues 324–518, 535–824, 915–942, 979–1013, 1418–1462, 1490–1514, and 1528–1565; these read HEDG…DKLP, SPLL…GVNG, VGRG…KTES, LGHR…VPPP, QQKQ…YAED, RTRS…PSVT, and SATQ…PEEA. Phosphoserine is present on residues serine 345 and serine 376. The span at 368–383 shows a compositional bias: polar residues; it reads IQNIKSPLSAPTSPCS. A compositionally biased stretch (acidic residues) spans 399-425; sequence EKDEEEEEEEEQPITEPNSEEEREDDA. The residue at position 413 (threonine 413) is a Phosphothreonine. Low complexity predominate over residues 434 to 446; it reads ASSASGQSSPGKD. Residues 453-473 show a composition bias toward polar residues; the sequence is ALHTTSSPTSQGRWLSASTAA. Residues 553 to 583 are compositionally biased toward low complexity; sequence SNFSSNSFQSSRPSPGPSGSPSYASSFSSPQ. Polar residues predominate over residues 584 to 598; it reads DTRSSPSGLLTSSFR. A coiled-coil region spans residues 597 to 645; that stretch reads FRQHQESLAAERERRRQEREERLQRIEREERNKFNREYLDKREEQRQAR. The span at 599 to 651 shows a compositional bias: basic and acidic residues; sequence QHQESLAAERERRRQEREERLQRIEREERNKFNREYLDKREEQRQARGERYKY. 2 stretches are compositionally biased toward low complexity: residues 675 to 684 and 692 to 701; these read DLSLDLSLPA and SSQSPSADSQ. Residues 751–761 show a composition bias toward acidic residues; that stretch reads SQEEPVLELEP. The span at 762 to 782 shows a compositional bias: basic and acidic residues; that stretch reads EERASLSEKERQNEEVNERDN. Positions 784–793 are enriched in low complexity; the sequence is SASSISSSSS. Over residues 795–809 the composition is skewed to basic and acidic residues; sequence LEREEKEDKLSEDRA. At serine 921 the chain carries Phosphoserine. Threonine 933 carries the post-translational modification Phosphothreonine. Pro residues predominate over residues 985–1013; that stretch reads PGPPPPPPPTFLGLPPPPPPPLLDSVPPP. The region spanning 985-1016 is the FH1 domain; sequence PGPPPPPPPTFLGLPPPPPPPLLDSVPPPPVP. The FH2 domain maps to 1039-1435; the sequence is GQPAFTKKKK…HRERNKTRGK (397 aa). Over residues 1420–1434 the composition is skewed to basic residues; the sequence is KQKRANHRERNKTRG. Positions 1444–1456 are enriched in low complexity; that stretch reads SGSSPAAPSQPQG. Residues 1515-1547 enclose the DAD domain; that stretch reads DDAADEIMDRIVKSATQVPSQRVVPRERKRSRA. Residues 1541 to 1556 show a composition bias toward basic residues; sequence ERKRSRANRKSLRRTL.

Belongs to the formin homology family. Interacts with nestin/NES-based interfilament (IF). Interacts with SQSTM1. As to expression, expressed in the heart, including left ventricle, kidney, brain and skeletal muscle, including soleus and tibialis anterior (at protein level).

It localises to the cytoplasm. The protein resides in the cytoskeleton. Its subcellular location is the myofibril. The protein localises to the sarcomere. It is found in the z line. May play a role in actin filament polymerization in cardiomyocytes. Actin-organizing protein that may cause stress fiber formation together with cell elongation. The chain is FH1/FH2 domain-containing protein 3 (Fhod3) from Mus musculus (Mouse).